Reading from the N-terminus, the 163-residue chain is MKVTTTRFGELDIEEGKVIHMPEGMLGFVEKRFILLTPENLGPFCWLQAVDNPDLAFVVADAKNCAPGYTFALTAEECRALELSERSEAIFLLVVTMAPEPGDITVNLRGPIVLNPERLIARQIVIEGEKYTTRHPFFETSEKKQSGLQRLERQPEKSVPPAG.

A compositionally biased stretch (basic and acidic residues) spans 136-156 (PFFETSEKKQSGLQRLERQPE). Positions 136–163 (PFFETSEKKQSGLQRLERQPEKSVPPAG) are disordered.

This sequence belongs to the FliW family. In terms of assembly, interacts with translational regulator CsrA and flagellin(s).

The protein resides in the cytoplasm. In terms of biological role, acts as an anti-CsrA protein, binds CsrA and prevents it from repressing translation of its target genes, one of which is flagellin. Binds to flagellin and participates in the assembly of the flagellum. This chain is Flagellar assembly factor FliW, found in Geotalea uraniireducens (strain Rf4) (Geobacter uraniireducens).